A 181-amino-acid chain; its full sequence is Probable Brix domain-containing ribosomal biogenesis protein (181 aa).

The Brix domain maps to Cys5–Val181.

Its function is as follows. Probably involved in the biogenesis of the ribosome. In Pyrobaculum aerophilum (strain ATCC 51768 / DSM 7523 / JCM 9630 / CIP 104966 / NBRC 100827 / IM2), this protein is Probable Brix domain-containing ribosomal biogenesis protein.